The chain runs to 450 residues: Chromosomal replication initiator protein DnaA (450 aa).

The interval 1-84 (MENIHDLWDR…AVKFIIPPNQ (84 aa)) is domain I, interacts with DnaA modulators. The tract at residues 84-111 (QADEKLELPSSAKKQRKPYEEANDFPQS) is domain II. The segment at 112-328 (MLNPKYTFDT…GALIRVVAYS (217 aa)) is domain III, AAA+ region. ATP is bound by residues Gly156, Gly158, Lys159, and Thr160. Residues 329-450 (SLINKEITAD…KEIQEKLKQL (122 aa)) are domain IV, binds dsDNA.

This sequence belongs to the DnaA family. Oligomerizes as a right-handed, spiral filament on DNA at oriC.

The protein resides in the cytoplasm. Plays an essential role in the initiation and regulation of chromosomal replication. ATP-DnaA binds to the origin of replication (oriC) to initiate formation of the DNA replication initiation complex once per cell cycle. Binds the DnaA box (a 9 base pair repeat at the origin) and separates the double-stranded (ds)DNA. Forms a right-handed helical filament on oriC DNA; dsDNA binds to the exterior of the filament while single-stranded (ss)DNA is stabiized in the filament's interior. The ATP-DnaA-oriC complex binds and stabilizes one strand of the AT-rich DNA unwinding element (DUE), permitting loading of DNA polymerase. After initiation quickly degrades to an ADP-DnaA complex that is not apt for DNA replication. Binds acidic phospholipids. This Geobacillus thermodenitrificans (strain NG80-2) protein is Chromosomal replication initiator protein DnaA.